A 194-amino-acid chain; its full sequence is Protein GrpE (194 aa).

Over residues 1-14 the composition is skewed to polar residues; the sequence is MENTQENPTSQNPT. The disordered stretch occupies residues 1-50; sequence MENTQENPTSQNPTPADETARQAAEAAAPQQEAAANAATDSPVNAEQSAL. Residues 21-38 are compositionally biased toward low complexity; the sequence is RQAAEAAAPQQEAAANAA.

This sequence belongs to the GrpE family. Homodimer.

It localises to the cytoplasm. Its function is as follows. Participates actively in the response to hyperosmotic and heat shock by preventing the aggregation of stress-denatured proteins, in association with DnaK and GrpE. It is the nucleotide exchange factor for DnaK and may function as a thermosensor. Unfolded proteins bind initially to DnaJ; upon interaction with the DnaJ-bound protein, DnaK hydrolyzes its bound ATP, resulting in the formation of a stable complex. GrpE releases ADP from DnaK; ATP binding to DnaK triggers the release of the substrate protein, thus completing the reaction cycle. Several rounds of ATP-dependent interactions between DnaJ, DnaK and GrpE are required for fully efficient folding. The polypeptide is Protein GrpE (Paraburkholderia phytofirmans (strain DSM 17436 / LMG 22146 / PsJN) (Burkholderia phytofirmans)).